A 1076-amino-acid polypeptide reads, in one-letter code: Nucleoporin NUP1 (1076 aa).

Positions 1 to 11 (MSSNTSSVMSS) are enriched in low complexity. The tract at residues 1 to 39 (MSSNTSSVMSSPRVEKRSFSSTLKSFFTNPNKKRPSSKK) is disordered. An N-acetylserine modification is found at serine 2. Residues 19–30 (FSSTLKSFFTNP) show a composition bias toward polar residues. 2 positions are modified to phosphoserine: serine 54 and serine 161. Disordered regions lie at residues 143-183 (SQSK…TNVG) and 224-260 (KKDNKDKEGNAGGDQKTSENRNNIKSSISNGNLATGP). Composition is skewed to polar residues over residues 154–170 (LCTSSTPSPIKNGSCTR) and 243–260 (NRNNIKSSISNGNLATGP). An FXF 1 repeat occupies 336-338 (FDF). At threonine 381 the chain carries Phosphothreonine. Residue serine 383 is modified to Phosphoserine. The stretch at 384–386 (FNF) is one FXF 2 repeat. The tract at residues 403 to 518 (TTLFNFGGKS…SFVFGASDKQ (116 aa)) is disordered. 2 FXFG repeats span residues 406-409 (FNFG) and 422-425 (FKFG). Residues 426–439 (KTSEKSENHTESDA) show a composition bias toward basic and acidic residues. FXFG repeat units lie at residues 448 to 451 (FSFG) and 484 to 487 (FDFG). The segment covering 488-505 (KTGDQKETKKGESEKDAS) has biased composition (basic and acidic residues). FXFG repeat units lie at residues 510 to 513 (FVFG), 525 to 528 (FTFG), 543 to 546 (FTFG), and 571 to 574 (FTFG). Residues 548–743 (AATAKETHTK…SMKSTASTAA (196 aa)) form a disordered region. FXF repeat units follow at residues 591–593 (FSF), 614–616 (FSF), 636–638 (FSF), and 657–659 (FTF). 2 stretches are compositionally biased toward polar residues: residues 634 to 649 (PTFSFTEPAQKDSSVV) and 658 to 667 (TFASSKTSQP). Serine 637 is subject to Phosphoserine. Residues 671–674 (FSFG) form an FXFG 9 repeat. The stretch at 689–691 (FSF) is one FXF 7 repeat. 2 FXFG repeats span residues 708–711 (FTFG) and 727–730 (FSFG). Over residues 708–723 (FTFGGSTTNNTTTTST) the composition is skewed to low complexity. The stretch at 753–755 (FSF) is one FXF 8 repeat. The stretch at 800 to 803 (FSFG) is one FXFG 12 repeat. FXF repeat units follow at residues 819 to 821 (FSF) and 866 to 868 (FGF). Residues 885–888 (FNFG) form an FXFG 13 repeat. An FXF 11 repeat occupies 929–931 (FNF). The interval 940 to 979 (GGSVFNMNGNTNANTVFAGSNNQPHQSQTPSFNTNSSFTP) is disordered. The segment covering 944–964 (FNMNGNTNANTVFAGSNNQPH) has biased composition (polar residues). Residues 965–979 (QSQTPSFNTNSSFTP) show a composition bias toward low complexity. FG repeat units lie at residues 1008 to 1009 (FG), 1027 to 1028 (FG), and 1038 to 1039 (FG). The tract at residues 1025-1054 (SIFGGAGGVPTTSFGQPQSAPNQMGMGTNN) is disordered. Residues 1034–1045 (PTTSFGQPQSAP) are compositionally biased toward polar residues. The interaction with KAP95 stretch occupies residues 1040–1076 (QPQSAPNQMGMGTNNGMSMGGGVMANRKIARMRHSKR).

In terms of assembly, component of the nuclear pore complex (NPC). NPC constitutes the exclusive means of nucleocytoplasmic transport. NPCs allow the passive diffusion of ions and small molecules and the active, nuclear transport receptor-mediated bidirectional transport of macromolecules such as proteins, RNAs, ribonucleoparticles (RNPs), and ribosomal subunits across the nuclear envelope. Due to its 8-fold rotational symmetry, all subunits are present with 8 copies or multiples thereof. Interacts through its FG repeats with nuclear transport receptors. Binds to the nuclear basket of the NPC through NUP60. Interacts with KAP122. Post-translationally, phosphorylated by CDC28.

It is found in the nucleus. The protein localises to the nuclear pore complex. The protein resides in the nucleus membrane. Functions as a component of the nuclear pore complex (NPC). NPC components, collectively referred to as nucleoporins (NUPs), can play the role of both NPC structural components and of docking or interaction partners for transiently associated nuclear transport factors. Active directional transport is assured by both, a Phe-Gly (FG) repeat affinity gradient for these transport factors across the NPC and a transport cofactor concentration gradient across the nuclear envelope (GSP1 and GSP2 GTPases associated predominantly with GTP in the nucleus, with GDP in the cytoplasm). As one of the FG repeat nucleoporins NUP1 is involved in interactions with and guidance of nuclear transport receptors such as SRP1-KAP95 (importin alpha and beta) through the NPC. Like the closely related NUP2 it also plays an important role in disassembling and recycling SRP1-KAP95 to the cytoplasm after nuclear import. Upon entry of the heterotrimeric SRP1-KAP95-cargo complex in the nucleus, NUP1 binds through its C-terminus to KAP95, thus accelerating the release of KAP95 and, indirectly, of the nuclear localization signal (NLS)-containing cargo from the SRP1-KAP95-cargo complex. The chain is Nucleoporin NUP1 (NUP1) from Saccharomyces cerevisiae (strain ATCC 204508 / S288c) (Baker's yeast).